The chain runs to 516 residues: Bifunctional pantoate ligase/cytidylate kinase (516 aa).

The interval 1–279 (MVRKIFQTNA…CGSTRLIDHT (279 aa)) is pantoate--beta-alanine ligase. 29–36 (MGGLHPGH) provides a ligand contact to ATP. Residue His-36 is the Proton donor of the active site. Gln-64 provides a ligand contact to (R)-pantoate. Gln-64 is a beta-alanine binding site. ATP is bound at residue 153-156 (GEKD). Gln-159 contributes to the (R)-pantoate binding site. 190–193 (YSSR) serves as a coordination point for ATP. Residues 280 to 516 (FLMHRKPIIA…PEEVWPTPNS (237 aa)) are cytidylate kinase.

The protein in the N-terminal section; belongs to the pantothenate synthetase family. In the C-terminal section; belongs to the cytidylate kinase family. Type 1 subfamily.

Its subcellular location is the cytoplasm. The catalysed reaction is (R)-pantoate + beta-alanine + ATP = (R)-pantothenate + AMP + diphosphate + H(+). It catalyses the reaction CMP + ATP = CDP + ADP. It carries out the reaction dCMP + ATP = dCDP + ADP. Its pathway is cofactor biosynthesis; (R)-pantothenate biosynthesis; (R)-pantothenate from (R)-pantoate and beta-alanine: step 1/1. Catalyzes the condensation of pantoate with beta-alanine in an ATP-dependent reaction via a pantoyl-adenylate intermediate. Its function is as follows. Catalyzes the transfer of a phosphate group from ATP to either CMP or dCMP to form CDP or dCDP and ADP, respectively. The protein is Bifunctional pantoate ligase/cytidylate kinase of Prochlorococcus marinus (strain NATL2A).